Consider the following 89-residue polypeptide: Small ribosomal subunit protein uS17 (89 aa).

It belongs to the universal ribosomal protein uS17 family. As to quaternary structure, part of the 30S ribosomal subunit.

Its function is as follows. One of the primary rRNA binding proteins, it binds specifically to the 5'-end of 16S ribosomal RNA. This is Small ribosomal subunit protein uS17 from Coxiella burnetii (strain RSA 331 / Henzerling II).